The chain runs to 555 residues: Inorganic phosphate transporter 1-11 (555 aa).

The Cytoplasmic portion of the chain corresponds to 1–28 (MADADGGSNLAVLDALDSARTQMYHMKA). A helical membrane pass occupies residues 29 to 49 (IVIAGMGFFTDAYDLFCISTV). At 50–77 (SKLLGRLYYQPDGSTDSKPGALSKTANN) the chain is on the extracellular side. The chain crosses the membrane as a helical span at residues 78–98 (MVIGVALVGTLMGQLVFGYFG). Over 99–105 (DKLGRKR) the chain is Cytoplasmic. A helical membrane pass occupies residues 106 to 126 (VYGVTLILMAACAIGSGLSFG). Residues 127–130 (SSRK) are Extracellular-facing. A helical membrane pass occupies residues 131 to 151 (AVIGTLCFFRFWLGFGIGGDY). Residues 152-167 (PLSATIMSEYSNKKTR) lie on the Cytoplasmic side of the membrane. The chain crosses the membrane as a helical span at residues 168-188 (GAFIAAVFAMQGVGIIFAGLV). Topologically, residues 189-216 (SMIVSSIFLTYNKAPSYKGNHDLSRQMP) are extracellular. A helical transmembrane segment spans residues 217-237 (AADYVWRIVLMIGAFPALATF). Residues 238-298 (YWRMKMPETA…PLLSMEFARR (61 aa)) lie on the Cytoplasmic side of the membrane. Residues 299-319 (HGLHLIGTTTTWFLLDIAFYS) form a helical membrane-spanning segment. Over 320 to 351 (QNLTQKDIFPAMGLISGAAEVNALTEMFQISK) the chain is Extracellular. A helical membrane pass occupies residues 352–372 (ASFLVALLGTFPGYWVTVALI). The Cytoplasmic portion of the chain corresponds to 373-377 (DKMGR). Residues 378–398 (YMIQLIGFFMMSMFMLAMGIL) form a helical membrane-spanning segment. At 399 to 408 (YDYLKTHHFL) the chain is on the extracellular side. Residues 409–436 (FGLLYALTFFFANFGPNSTTFVLPAELF) form a helical membrane-spanning segment. Topologically, residues 437–442 (PTRVRS) are cytoplasmic. The chain crosses the membrane as a helical span at residues 443–463 (TCHAISAAAGKAGAIVAAFGI). Residues 464-477 (QKLTYNSQVKSIKK) are Extracellular-facing. Residues 478–498 (ALIILSITNMLGFFFTFLVPE) form a helical membrane-spanning segment. At 499-555 (TMGRSLEEISGEDGNTGAGGGGAPAAANAGVGVSASDVSRDEKFPASSTEWQTSMHA) the chain is on the cytoplasmic side. Residues 506–555 (EISGEDGNTGAGGGGAPAAANAGVGVSASDVSRDEKFPASSTEWQTSMHA) form a disordered region. Residues 512–521 (GNTGAGGGGA) show a composition bias toward gly residues. Positions 522 to 535 (PAAANAGVGVSASD) are enriched in low complexity. Positions 544 to 555 (ASSTEWQTSMHA) are enriched in polar residues.

This sequence belongs to the major facilitator superfamily. Phosphate:H(+) symporter (TC 2.A.1.9) family.

It localises to the membrane. Its function is as follows. Symbiosis-specific regulated inorganic phosphate (Pi) transporter. Probably involved in symbiosis-mediated Pi uptake in roots colonized by myccorhizal fungi. In Oryza sativa subsp. japonica (Rice), this protein is Inorganic phosphate transporter 1-11 (PHT1-11).